The chain runs to 269 residues: 5'-nucleotidase SurE (269 aa).

Residues aspartate 11, aspartate 12, serine 43, and asparagine 101 each contribute to the a divalent metal cation site.

It belongs to the SurE nucleotidase family. Requires a divalent metal cation as cofactor.

It is found in the cytoplasm. It catalyses the reaction a ribonucleoside 5'-phosphate + H2O = a ribonucleoside + phosphate. Functionally, nucleotidase that shows phosphatase activity on nucleoside 5'-monophosphates. The chain is 5'-nucleotidase SurE from Prochlorococcus marinus (strain MIT 9211).